A 534-amino-acid chain; its full sequence is 5,6-dihydroxyindole-2-carboxylic acid oxidase (534 aa).

Positions 1–23 are cleaved as a signal peptide; sequence MLGPATFLPLTAALLLLIPGGRA. At 24 to 477 the chain is on the lumenal, melanosome side; it reads QFPRQCVTPE…WPSRALNFTE (454 aa). 5 disulfides stabilise this stretch: Cys-29–Cys-40, Cys-41–Cys-65, Cys-56–Cys-99, Cys-101–Cys-110, and Cys-113–Cys-122. Residues Asn-96 and Asn-104 are each glycosylated (N-linked (GlcNAc...) asparagine). Asn-175 and Asn-181 each carry an N-linked (GlcNAc...) asparagine glycan. Zn(2+)-binding residues include His-192, His-215, and His-224. Cystine bridges form between Cys-258–Cys-261 and Cys-290–Cys-303. Asn-304 and Asn-350 each carry an N-linked (GlcNAc...) asparagine glycan. Zn(2+) contacts are provided by His-377 and His-381. Asn-385 is a glycosylation site (N-linked (GlcNAc...) asparagine). Position 404 (His-404) interacts with Zn(2+). A helical transmembrane segment spans residues 478-501; sequence IITIAVVAALVLVAVIFAAASCAV. Residues 502–534 lie on the Cytoplasmic side of the membrane; sequence HRSRKDDVHQPLLGEQYPRYSEEYERDASQSAV.

The protein belongs to the tyrosinase family. The cofactor is Cu(2+). Requires Zn(2+) as cofactor.

It is found in the melanosome membrane. The catalysed reaction is 2 5,6-dihydroxyindole-2-carboxylate + O2 = 2 indole-5,6-quinone-2-carboxylate + 2 H2O. Its pathway is pigment biosynthesis; melanin biosynthesis. In terms of biological role, plays a role in melanin biosynthesis. Catalyzes the oxidation of 5,6-dihydroxyindole-2-carboxylic acid (DHICA) into indole-5,6-quinone-2-carboxylic acid. May regulate or influence the type of melanin synthesized. Also to a lower extent, capable of hydroxylating tyrosine and producing melanin. The protein is 5,6-dihydroxyindole-2-carboxylic acid oxidase (TYRP1) of Ambystoma mexicanum (Axolotl).